The primary structure comprises 395 residues: Probable alcohol dehydrogenase EutG (395 aa).

NAD(+) is bound by residues aspartate 57, 116–120, 156–160, lysine 178, and 197–201; these read GSVLD, TTAGT, and VTEGV. Residues aspartate 212, histidine 216, histidine 281, and histidine 295 each contribute to the Fe cation site. NAD(+) contacts are provided by histidine 295 and aspartate 354.

This sequence belongs to the iron-containing alcohol dehydrogenase family. Fe cation serves as cofactor.

It localises to the bacterial microcompartment. The enzyme catalyses ethanol + NAD(+) = acetaldehyde + NADH + H(+). Its pathway is amine and polyamine degradation; ethanolamine degradation. In terms of biological role, probably acts on the acetaldehyde produced by the degradation of ethanolamine, producing ethanol. Expression of the eut operon allows this bacteria to use ethanolamine (EA) as a carbon, nitrogen and energy source. It relies on cobalamin (vitamin B12) both as a cofactor for the ethanolamine ammonia-lyase (EAL) activity and to induce the operon. EA enhances bacterial survival in macrophages in a concentration-dependent manner, suggesting it is an important nutrient during infection. The sequence is that of Probable alcohol dehydrogenase EutG from Salmonella typhimurium (strain LT2 / SGSC1412 / ATCC 700720).